The chain runs to 253 residues: Polyprenal reductase (253 aa).

Transmembrane regions (helical) follow at residues 18 to 38, 78 to 98, 123 to 143, and 200 to 220; these read LSFFVGICSLFIAKSCLPEFL, FLSLVTLYFYPKFPIVWIIFG, HYLVGIWFYSVLLLILNISLY, and IIYSTLLPYEQEFYLTLVWVI.

The protein belongs to the steroid 5-alpha reductase family. Polyprenal reductase subfamily.

The protein resides in the endoplasmic reticulum membrane. It carries out the reaction a di-trans,poly-cis-dolichal + NADP(+) = a di-trans,poly-cis-polyprenal + NADPH + H(+). It participates in protein modification; protein glycosylation. Plays a key role in early steps of protein N-linked glycosylation by being involved in the conversion of polyprenol into dolichol. Acts as a polyprenal reductase that mediates the reduction of polyprenal into dolichal in a NADP-dependent mechanism. Dolichols are required for the synthesis of dolichol-linked monosaccharides and the oligosaccharide precursor used for N-glycosylation. The polypeptide is Polyprenal reductase (Saccharomyces cerevisiae (strain ATCC 204508 / S288c) (Baker's yeast)).